The sequence spans 345 residues: Anthranilate phosphoribosyltransferase (345 aa).

Residues G75, 78–79 (GD), S83, 85–88 (NIST), 103–111 (KHGNRAASS), and G115 contribute to the 5-phospho-alpha-D-ribose 1-diphosphate site. G75 serves as a coordination point for anthranilate. S87 is a binding site for Mg(2+). N106 contributes to the anthranilate binding site. R161 is an anthranilate binding site. Residues D219 and E220 each contribute to the Mg(2+) site.

This sequence belongs to the anthranilate phosphoribosyltransferase family. In terms of assembly, homodimer. Requires Mg(2+) as cofactor.

The enzyme catalyses N-(5-phospho-beta-D-ribosyl)anthranilate + diphosphate = 5-phospho-alpha-D-ribose 1-diphosphate + anthranilate. It participates in amino-acid biosynthesis; L-tryptophan biosynthesis; L-tryptophan from chorismate: step 2/5. Functionally, catalyzes the transfer of the phosphoribosyl group of 5-phosphorylribose-1-pyrophosphate (PRPP) to anthranilate to yield N-(5'-phosphoribosyl)-anthranilate (PRA). The sequence is that of Anthranilate phosphoribosyltransferase from Nocardia farcinica (strain IFM 10152).